The following is a 600-amino-acid chain: UvrABC system protein C (600 aa).

Positions 15–92 (EKAGCYLMKD…IKKYQPYYNV (78 aa)) constitute a GIY-YIG domain. Residues 197–232 (QEVKKDLTNKMLQASADLEFERAGELRDQLKYIEET) form the UVR domain.

Belongs to the UvrC family. Interacts with UvrB in an incision complex.

It is found in the cytoplasm. Its function is as follows. The UvrABC repair system catalyzes the recognition and processing of DNA lesions. UvrC both incises the 5' and 3' sides of the lesion. The N-terminal half is responsible for the 3' incision and the C-terminal half is responsible for the 5' incision. The chain is UvrABC system protein C from Lactobacillus delbrueckii subsp. bulgaricus (strain ATCC BAA-365 / Lb-18).